Here is a 202-residue protein sequence, read N- to C-terminus: Precorrin-2 dehydrogenase (202 aa).

NAD(+) is bound by residues threonine 20 to isoleucine 21 and proline 41 to threonine 42.

This sequence belongs to the precorrin-2 dehydrogenase / sirohydrochlorin ferrochelatase family. In terms of assembly, homodimer.

It catalyses the reaction precorrin-2 + NAD(+) = sirohydrochlorin + NADH + 2 H(+). It participates in cofactor biosynthesis; adenosylcobalamin biosynthesis; sirohydrochlorin from precorrin-2: step 1/1. It functions in the pathway porphyrin-containing compound metabolism; siroheme biosynthesis; sirohydrochlorin from precorrin-2: step 1/1. Catalyzes the dehydrogenation of precorrin-2 to form sirohydrochlorin which is used as a precursor in both siroheme biosynthesis and in the anaerobic branch of adenosylcobalamin biosynthesis. It is unable to oxidize precorrin-3. This chain is Precorrin-2 dehydrogenase (sirC), found in Priestia megaterium (Bacillus megaterium).